Here is a 657-residue protein sequence, read N- to C-terminus: Histidine ammonia-lyase (657 aa).

A cross-link (5-imidazolinone (Ala-Gly)) is located at residues 253–255; it reads ASG. Residue S254 is modified to 2,3-didehydroalanine (Ser). Phosphothreonine is present on T396. S635 is modified (phosphoserine). Residue T637 is modified to Phosphothreonine. S648 carries the post-translational modification Phosphoserine.

Belongs to the PAL/histidase family. Post-translationally, contains an active site 4-methylidene-imidazol-5-one (MIO), which is formed autocatalytically by cyclization and dehydration of residues Ala-Ser-Gly.

The enzyme catalyses L-histidine = trans-urocanate + NH4(+). Its pathway is amino-acid degradation; L-histidine degradation into L-glutamate; N-formimidoyl-L-glutamate from L-histidine: step 1/3. The chain is Histidine ammonia-lyase (HAL) from Bos taurus (Bovine).